A 270-amino-acid chain; its full sequence is uncharacterized protein (270 aa).

Disordered regions lie at residues 1–21 and 53–77; these read MSTN…YEKP and PNIL…AKLN. Residues 58 to 75 are compositionally biased toward basic and acidic residues; the sequence is SKHDGDKNKNDKKKEDAK. Positions 182-270 form a coiled coil; it reads EENKSREEKH…KIEDNLNTYE (89 aa).

This is an uncharacterized protein from Plasmodium falciparum (isolate 3D7).